The sequence spans 181 residues: UPF0340 protein OB2986 (181 aa).

This sequence belongs to the UPF0340 family.

This Oceanobacillus iheyensis (strain DSM 14371 / CIP 107618 / JCM 11309 / KCTC 3954 / HTE831) protein is UPF0340 protein OB2986.